We begin with the raw amino-acid sequence, 148 residues long: Small ribosomal subunit protein uS7m (148 aa).

Belongs to the universal ribosomal protein uS7 family. As to quaternary structure, part of the small ribosomal subunit.

The protein localises to the mitochondrion. In terms of biological role, one of the primary rRNA binding proteins, it binds directly to 18S rRNA where it nucleates assembly of the head domain of the small subunit. The protein is Small ribosomal subunit protein uS7m (RPS7) of Triticum aestivum (Wheat).